The primary structure comprises 347 residues: MNERIVVAVDAMGGDNAPEVEVEGAVAAARRWKIPIVLVGDQGRLDAVLSRYDLKGLDIAIRHATEVVGMHDSPSDAVRKKKDSSIRVAFDLLRGNEVQAVVSAGNSGATMAVGMFLCKRIPGIDRPAIATILPNKKSQTVLLDGGANVDCKPFHLSQFGTMGAVYAKFMLGKERPRVGVLSNGEEESKGNELAREAHKLLKQSSLNYIGFVEGRDIFSGDVDVVVCDGFVGNVVLKVSEGLSEAISDMLRGEIKQRLFAKLGYLLARPAFRAFKKKVDYAEYGGAPLLGIQGTGMICHGGSNARAIMNAIHMARESVSQRINDRLIAQLGMENPELSDDVVKRGAS.

This sequence belongs to the PlsX family. Homodimer. Probably interacts with PlsY.

The protein resides in the cytoplasm. It carries out the reaction a fatty acyl-[ACP] + phosphate = an acyl phosphate + holo-[ACP]. It participates in lipid metabolism; phospholipid metabolism. Its function is as follows. Catalyzes the reversible formation of acyl-phosphate (acyl-PO(4)) from acyl-[acyl-carrier-protein] (acyl-ACP). This enzyme utilizes acyl-ACP as fatty acyl donor, but not acyl-CoA. This is Phosphate acyltransferase from Syntrophotalea carbinolica (strain DSM 2380 / NBRC 103641 / GraBd1) (Pelobacter carbinolicus).